The following is a 96-amino-acid chain: Co-chaperonin GroES (96 aa).

This sequence belongs to the GroES chaperonin family. Heptamer of 7 subunits arranged in a ring. Interacts with the chaperonin GroEL.

The protein resides in the cytoplasm. Functionally, together with the chaperonin GroEL, plays an essential role in assisting protein folding. The GroEL-GroES system forms a nano-cage that allows encapsulation of the non-native substrate proteins and provides a physical environment optimized to promote and accelerate protein folding. GroES binds to the apical surface of the GroEL ring, thereby capping the opening of the GroEL channel. This chain is Co-chaperonin GroES, found in Caulobacter vibrioides (strain ATCC 19089 / CIP 103742 / CB 15) (Caulobacter crescentus).